The chain runs to 569 residues: Undecaprenyl phosphate-alpha-4-amino-4-deoxy-L-arabinose arabinosyl transferase 1 (569 aa).

Helical transmembrane passes span 27-47 (GLILAFVMFYLLPLMSHGLWI), 98-120 (LFGVRIASALSTGVSVWLTYLLA), 129-149 (INAASALLYMSFGLIAGQAGY), 151-171 (NLDPQFTLWVNLSMVAVWFAI), 194-214 (LMTKGFLALLLPVLIALPYML), 225-245 (YGLVAVVVCALVSLPWVLAVH), 275-295 (PWWFYLPLLFASTLPWALLLP), 311-331 (AYLALWFLLPLAFFSLSSGKL), 334-354 (YIMPCLLPVALLMGQTVVKWL), 366-386 (GVFNTVLASVALVALLYLQAT), 396-416 (FSLSLAYIVVVGWIIANALQV), and 420-440 (LTLWAMPALGIGLLVALLPAA).

The protein belongs to the glycosyltransferase 83 family.

Its subcellular location is the cell inner membrane. It catalyses the reaction 4-amino-4-deoxy-alpha-L-arabinopyranosyl di-trans,octa-cis-undecaprenyl phosphate + lipid IVA = lipid IIA + di-trans,octa-cis-undecaprenyl phosphate.. The protein operates within lipopolysaccharide metabolism; 4-amino-4-deoxy-beta-L-arabinose-lipid A biosynthesis. Its function is as follows. Catalyzes the transfer of the L-Ara4N moiety of the glycolipid undecaprenyl phosphate-alpha-L-Ara4N to lipid A. The modified arabinose is attached to lipid A and is required for resistance to polymyxin and cationic antimicrobial peptides. This is Undecaprenyl phosphate-alpha-4-amino-4-deoxy-L-arabinose arabinosyl transferase 1 from Pseudomonas fluorescens (strain Pf0-1).